A 200-amino-acid chain; its full sequence is Recombination protein RecR (200 aa).

Residues 58-73 (CSLCCNLTDEDPCSIC) form a C4-type zinc finger. The region spanning 81–176 (NLLCVVEEPR…KVTRIAHGIP (96 aa)) is the Toprim domain.

Belongs to the RecR family.

May play a role in DNA repair. It seems to be involved in an RecBC-independent recombinational process of DNA repair. It may act with RecF and RecO. This is Recombination protein RecR from Desulforamulus reducens (strain ATCC BAA-1160 / DSM 100696 / MI-1) (Desulfotomaculum reducens).